We begin with the raw amino-acid sequence, 197 residues long: Small ribosomal subunit protein eS1 (197 aa).

This sequence belongs to the eukaryotic ribosomal protein eS1 family.

This Methanoculleus marisnigri (strain ATCC 35101 / DSM 1498 / JR1) protein is Small ribosomal subunit protein eS1.